The chain runs to 313 residues: Cytochrome c biogenesis protein CcsA (313 aa).

The next 8 membrane-spanning stretches (helical) occupy residues 9–29 (ILTH…LITF), 44–64 (GIIV…ISSG), 71–91 (LYES…IPYF), 111–131 (GFAT…VPAL), 143–163 (MILG…LLVI), 217–237 (VISL…VWAN), 244–264 (WNWD…AIYL), and 278–298 (AIVA…VNLL).

It belongs to the CcmF/CycK/Ccl1/NrfE/CcsA family. May interact with Ccs1.

The protein resides in the plastid. Its subcellular location is the chloroplast thylakoid membrane. Required during biogenesis of c-type cytochromes (cytochrome c6 and cytochrome f) at the step of heme attachment. The sequence is that of Cytochrome c biogenesis protein CcsA from Solanum bulbocastanum (Wild potato).